The following is a 317-amino-acid chain: Acetyl-coenzyme A carboxylase carboxyl transferase subunit alpha (317 aa).

One can recognise a CoA carboxyltransferase C-terminal domain in the interval 39–293 (RLESRVNDAM…GDVIAKALAD (255 aa)).

The protein belongs to the AccA family. Acetyl-CoA carboxylase is a heterohexamer composed of biotin carboxyl carrier protein (AccB), biotin carboxylase (AccC) and two subunits each of ACCase subunit alpha (AccA) and ACCase subunit beta (AccD).

Its subcellular location is the cytoplasm. The enzyme catalyses N(6)-carboxybiotinyl-L-lysyl-[protein] + acetyl-CoA = N(6)-biotinyl-L-lysyl-[protein] + malonyl-CoA. It functions in the pathway lipid metabolism; malonyl-CoA biosynthesis; malonyl-CoA from acetyl-CoA: step 1/1. Its function is as follows. Component of the acetyl coenzyme A carboxylase (ACC) complex. First, biotin carboxylase catalyzes the carboxylation of biotin on its carrier protein (BCCP) and then the CO(2) group is transferred by the carboxyltransferase to acetyl-CoA to form malonyl-CoA. In Agrobacterium fabrum (strain C58 / ATCC 33970) (Agrobacterium tumefaciens (strain C58)), this protein is Acetyl-coenzyme A carboxylase carboxyl transferase subunit alpha.